Consider the following 402-residue polypeptide: Tryptophan synthase beta chain (402 aa).

At Lys-91 the chain carries N6-(pyridoxal phosphate)lysine.

This sequence belongs to the TrpB family. Tetramer of two alpha and two beta chains. Pyridoxal 5'-phosphate is required as a cofactor.

The enzyme catalyses (1S,2R)-1-C-(indol-3-yl)glycerol 3-phosphate + L-serine = D-glyceraldehyde 3-phosphate + L-tryptophan + H2O. Its pathway is amino-acid biosynthesis; L-tryptophan biosynthesis; L-tryptophan from chorismate: step 5/5. Its function is as follows. The beta subunit is responsible for the synthesis of L-tryptophan from indole and L-serine. The sequence is that of Tryptophan synthase beta chain from Streptococcus thermophilus (strain CNRZ 1066).